Here is a 170-residue protein sequence, read N- to C-terminus: Shikimate kinase (170 aa).

Position 15–20 (15–20) interacts with ATP; the sequence is GTGKTT. Threonine 19 contributes to the Mg(2+) binding site. Substrate-binding residues include aspartate 37, arginine 61, and glycine 82. Arginine 120 contacts ATP. Substrate is bound at residue arginine 138. ATP is bound at residue glutamine 154.

This sequence belongs to the shikimate kinase family. As to quaternary structure, monomer. The cofactor is Mg(2+).

It is found in the cytoplasm. It catalyses the reaction shikimate + ATP = 3-phosphoshikimate + ADP + H(+). The protein operates within metabolic intermediate biosynthesis; chorismate biosynthesis; chorismate from D-erythrose 4-phosphate and phosphoenolpyruvate: step 5/7. Its function is as follows. Catalyzes the specific phosphorylation of the 3-hydroxyl group of shikimic acid using ATP as a cosubstrate. This Staphylococcus epidermidis (strain ATCC 35984 / DSM 28319 / BCRC 17069 / CCUG 31568 / BM 3577 / RP62A) protein is Shikimate kinase.